A 298-amino-acid polypeptide reads, in one-letter code: Probable endonuclease 4 (298 aa).

Positions 69, 111, 146, 180, 183, 215, 228, 230, and 260 each coordinate Zn(2+).

It belongs to the AP endonuclease 2 family. Zn(2+) is required as a cofactor.

It carries out the reaction Endonucleolytic cleavage to 5'-phosphooligonucleotide end-products.. Its function is as follows. Endonuclease IV plays a role in DNA repair. It cleaves phosphodiester bonds at apurinic or apyrimidinic (AP) sites, generating a 3'-hydroxyl group and a 5'-terminal sugar phosphate. In Bacillus cereus (strain B4264), this protein is Probable endonuclease 4.